A 357-amino-acid polypeptide reads, in one-letter code: MAAPVQTIDVLLAEHADLERALADPELHSRPDEARKAGRRFARLARIVATYRKLVAAREDLETAHELAATDESFVAEAAELEARVAELDSQLTDMLAPRDPHDADDIVLEVKSGEGGEESALFAADLARMYIRYAERHGWTVTVLGETTSDLGGYRDATLAIASKGDTADGVWSRMKFEGGVHRVQRVPVTESQGRVHTSAAGVLVYPEPEEVGEVQIDESDLRIDVYRSSGKGGQGVNTTDSAVRITHLPTGIVVTCQNERSQLQNKIRAMQVLGARLQAIAEERAMADASADRASQIRTVDRSERIRTYNFPENRVTDHRIGYKSHNLDQVLDGDLDALFDALAAADKQARLQQS.

N5-methylglutamine is present on glutamine 236.

The protein belongs to the prokaryotic/mitochondrial release factor family. In terms of processing, methylated by PrmC. Methylation increases the termination efficiency of RF1.

It localises to the cytoplasm. In terms of biological role, peptide chain release factor 1 directs the termination of translation in response to the peptide chain termination codons UAG and UAA. This is Peptide chain release factor 1 from Mycobacterium ulcerans (strain Agy99).